The following is a 157-amino-acid chain: Small ribosomal subunit protein uS7 (157 aa).

The protein belongs to the universal ribosomal protein uS7 family. As to quaternary structure, part of the 30S ribosomal subunit. Contacts proteins S9 and S11.

In terms of biological role, one of the primary rRNA binding proteins, it binds directly to 16S rRNA where it nucleates assembly of the head domain of the 30S subunit. Is located at the subunit interface close to the decoding center, probably blocks exit of the E-site tRNA. This chain is Small ribosomal subunit protein uS7, found in Chlamydia trachomatis serovar A (strain ATCC VR-571B / DSM 19440 / HAR-13).